The sequence spans 249 residues: tRNA (guanine-N(1)-)-methyltransferase (249 aa).

Residues Gly-117 and 137–142 contribute to the S-adenosyl-L-methionine site; that span reads LGDFVL.

Belongs to the RNA methyltransferase TrmD family. Homodimer.

It is found in the cytoplasm. It catalyses the reaction guanosine(37) in tRNA + S-adenosyl-L-methionine = N(1)-methylguanosine(37) in tRNA + S-adenosyl-L-homocysteine + H(+). In terms of biological role, specifically methylates guanosine-37 in various tRNAs. The polypeptide is tRNA (guanine-N(1)-)-methyltransferase (Janthinobacterium sp. (strain Marseille) (Minibacterium massiliensis)).